A 191-amino-acid polypeptide reads, in one-letter code: Threonylcarbamoyl-AMP synthase (191 aa).

The YrdC-like domain maps to Val10–Ala191.

This sequence belongs to the SUA5 family. TsaC subfamily.

It localises to the cytoplasm. It carries out the reaction L-threonine + hydrogencarbonate + ATP = L-threonylcarbamoyladenylate + diphosphate + H2O. In terms of biological role, required for the formation of a threonylcarbamoyl group on adenosine at position 37 (t(6)A37) in tRNAs that read codons beginning with adenine. Catalyzes the conversion of L-threonine, HCO(3)(-)/CO(2) and ATP to give threonylcarbamoyl-AMP (TC-AMP) as the acyladenylate intermediate, with the release of diphosphate. In Saccharophagus degradans (strain 2-40 / ATCC 43961 / DSM 17024), this protein is Threonylcarbamoyl-AMP synthase.